A 248-amino-acid polypeptide reads, in one-letter code: MNQVLTETRPIRLKGRSFLAMVLSPELPLDGWLELLDDLARRSSGFFLGRPVVLDMENLAIERAQLVYLLQALNDRGVWIMGVEGARPSLLGPGMPPAMRGGQPAADFEAPAGEPQANPGAPEPQISQAVRAPGHAVHAMPSMVITEPVRSGQSVYFPEGDVTIVGSVASGAEVVAGGSIHIYGTLRGRALAGTAGNTSARIFCRKLEAELVAIDGLYKTAEDLEPRFRGQAVQLWLDGDYMMIDTLS.

Residues 94–126 are disordered; that stretch reads GMPPAMRGGQPAADFEAPAGEPQANPGAPEPQI.

The protein belongs to the MinC family. In terms of assembly, interacts with MinD and FtsZ.

Its function is as follows. Cell division inhibitor that blocks the formation of polar Z ring septums. Rapidly oscillates between the poles of the cell to destabilize FtsZ filaments that have formed before they mature into polar Z rings. Prevents FtsZ polymerization. In Brucella suis biovar 1 (strain 1330), this protein is Probable septum site-determining protein MinC.